A 125-amino-acid chain; its full sequence is Photosystem II extrinsic protein U (125 aa).

The first 29 residues, 1-29 (MKRLLSWLTGLVVMAGLLFSLATPSGVQA), serve as a signal peptide directing secretion.

The protein belongs to the PsbU family. As to quaternary structure, PSII is composed of 1 copy each of membrane proteins PsbA, PsbB, PsbC, PsbD, PsbE, PsbF, PsbH, PsbI, PsbJ, PsbK, PsbL, PsbM, PsbT, PsbX, PsbY, PsbZ, Psb30/Ycf12, peripheral proteins PsbO, CyanoQ (PsbQ), PsbU, PsbV and a large number of cofactors. It forms dimeric complexes.

The protein localises to the cellular thylakoid membrane. One of the extrinsic, lumenal subunits of photosystem II (PSII). PSII is a light-driven water plastoquinone oxidoreductase, using light energy to abstract electrons from H(2)O, generating a proton gradient subsequently used for ATP formation. The extrinsic proteins stabilize the structure of photosystem II oxygen-evolving complex (OEC), the ion environment of oxygen evolution and protect the OEC against heat-induced inactivation. The polypeptide is Photosystem II extrinsic protein U (Synechococcus sp. (strain WH7803)).